The chain runs to 122 residues: Flagellar protein FliT (122 aa).

Positions 1–50 (MTSTVEFINRWQRIALLSQSLLELAQRGEWDLLLQQEVSYLQSIETVMEK) are required for homodimerization. Residues 60–98 (IQDMVAGYIKQTLDNEQLLKGLLQQRLDELSSLIGQSTR) form a fliD binding region.

Belongs to the FliT family. In terms of assembly, homodimer. Interacts with FliD and FlhC.

The protein localises to the cytoplasm. Its subcellular location is the cytosol. Its function is as follows. Dual-function protein that regulates the transcription of class 2 flagellar operons and that also acts as an export chaperone for the filament-capping protein FliD. As a transcriptional regulator, acts as an anti-FlhDC factor; it directly binds FlhC, thus inhibiting the binding of the FlhC/FlhD complex to class 2 promoters, resulting in decreased expression of class 2 flagellar operons. As a chaperone, effects FliD transition to the membrane by preventing its premature polymerization, and by directing it to the export apparatus. The chain is Flagellar protein FliT from Salmonella gallinarum (strain 287/91 / NCTC 13346).